A 297-amino-acid polypeptide reads, in one-letter code: NAD kinase (297 aa).

The active-site Proton acceptor is the D74. Residues 74–75, R79, 148–149, R176, D178, 189–194, and Q248 contribute to the NAD(+) site; these read DG, NE, and TAYALS.

The protein belongs to the NAD kinase family. Requires a divalent metal cation as cofactor.

The protein localises to the cytoplasm. The enzyme catalyses NAD(+) + ATP = ADP + NADP(+) + H(+). Functionally, involved in the regulation of the intracellular balance of NAD and NADP, and is a key enzyme in the biosynthesis of NADP. Catalyzes specifically the phosphorylation on 2'-hydroxyl of the adenosine moiety of NAD to yield NADP. The chain is NAD kinase from Blochmanniella pennsylvanica (strain BPEN).